Consider the following 266-residue polypeptide: Adaptin ear-binding coat-associated protein 2 (266 aa).

Disordered regions lie at residues 164–191 and 244–266; these read SMKKKDGAAGTPRARPTSTGGLSLLPPP and GDFTKSTGSTSSQTQPGAGWVQF. Ser-181 carries the phosphoserine modification. The WXXF motif 1 motif lies at 243-246; that stretch reads WGDF. Low complexity predominate over residues 247 to 258; the sequence is TKSTGSTSSQTQ. The WXXF motif 2 motif lies at 263–266; the sequence is WVQF.

This sequence belongs to the NECAP family. Interacts with AP1G1 and AP2A1 components of the adapter protein complexes AP-1 and AP-2. Interacts with the GAE domain proteins GGA1, GGA2 and GGA3.

Its subcellular location is the cytoplasmic vesicle. It is found in the clathrin-coated vesicle membrane. It localises to the cell membrane. Its function is as follows. Involved in endocytosis. The sequence is that of Adaptin ear-binding coat-associated protein 2 (NECAP2) from Bos taurus (Bovine).